Here is a 108-residue protein sequence, read N- to C-terminus: Abscisic stress-ripening protein 3 (108 aa).

Disordered regions lie at residues 1–34 (MAEEKQHHRLFHHKNREEEGGPVDHKKKVKHHSH) and 84–108 (FAFHEHHQKKEAKKEKKAAEKGRHH). The span at 15–24 (NREEEGGPVD) shows a compositional bias: basic and acidic residues. The segment covering 25-34 (HKKKVKHHSH) has biased composition (basic residues). The span at 95 to 108 (AKKEKKAAEKGRHH) shows a compositional bias: basic and acidic residues.

This sequence belongs to the abscisic acid and water stress-induced protein family.

In Solanum lycopersicum (Tomato), this protein is Abscisic stress-ripening protein 3.